The sequence spans 321 residues: uncharacterized protein (321 aa).

Transmembrane regions (helical) follow at residues 10–28 (LWCS…EMSI), 41–63 (IALY…IWIY), 94–111 (NVAM…SMVH), 116–138 (LFYG…VWLL), 143–165 (FLFY…SNGV), 200–222 (NGVI…DIIF), 237–259 (PFII…VILA), 266–283 (YIIK…SIKI), and 293–315 (IMLS…KFFF).

This sequence belongs to the TerC family.

It localises to the cell membrane. This is an uncharacterized protein from Buchnera aphidicola subsp. Baizongia pistaciae (strain Bp).